We begin with the raw amino-acid sequence, 521 residues long: Protein disulfide-isomerase A5 (521 aa).

Positions 1–25 are cleaved as a signal peptide; it reads MARVVPAWLLLPLAVWVVLPTWLSS. Thioredoxin domains lie at 136–263, 274–386, and 387–508; these read FLKD…NPQP, ADEG…NPES, and PPPP…TLRE. Intrachain disulfides connect Cys184–Cys187, Cys307–Cys310, and Cys428–Cys431. The Prevents secretion from ER signature appears at 518–521; the sequence is KEEL.

The protein belongs to the protein disulfide isomerase family.

The protein resides in the endoplasmic reticulum lumen. It carries out the reaction Catalyzes the rearrangement of -S-S- bonds in proteins.. This chain is Protein disulfide-isomerase A5 (PDIA5), found in Bos taurus (Bovine).